The primary structure comprises 389 residues: Alpha carbonic anhydrase 8 (389 aa).

Residues 1 to 22 form the signal peptide; that stretch reads MKISSLGWVLVLIFISITIVSS. The disordered stretch occupies residues 21–153; the sequence is SSAPAPKPPK…TKGNKGPAKW (133 aa). The segment covering 25–129 has biased composition (pro residues); it reads APKPPKPKPA…PKPKPAPKPA (105 aa). The region spanning 138–374 is the Alpha-carbonic anhydrase domain; that stretch reads TEFSYETKGN…VNKRKVYLYK (237 aa). Cys-163 and Cys-324 form a disulfide bridge. The N-linked (GlcNAc...) asparagine glycan is linked to Asn-196. The active-site Proton acceptor is the His-204. Zn(2+) is bound by residues His-232, His-234, and His-251. Residue 320-321 participates in substrate binding; it reads TA. Residue Asn-385 is glycosylated (N-linked (GlcNAc...) asparagine).

It belongs to the alpha-class carbonic anhydrase family. Zn(2+) serves as cofactor. N-glycosylated.

It localises to the plastid. The protein resides in the chloroplast stroma. The catalysed reaction is hydrogencarbonate + H(+) = CO2 + H2O. Its function is as follows. Reversible hydration of carbon dioxide. This is Alpha carbonic anhydrase 8 (ACA8) from Arabidopsis thaliana (Mouse-ear cress).